We begin with the raw amino-acid sequence, 1073 residues long: Guanylyl cyclase C (1073 aa).

A signal peptide spans 1-23 (MKTLLLDLALWSLLFQPGWLSFS). The Extracellular segment spans residues 24-430 (SQVSQNCHNG…PNDITGRGPQ (407 aa)). N-linked (GlcNAc...) asparagine glycans are attached at residues Asn32, Asn75, Asn79, Asn195, Asn284, Asn307, Asn345, and Asn402. The chain crosses the membrane as a helical span at residues 431-454 (ILMIAVFTLTGAVVLLLLVALLML). The Cytoplasmic segment spans residues 455 to 1073 (RKYRKDYELR…NTTDKESTYF (619 aa)). A Protein kinase domain is found at 489-749 (LKIDDDKRRD…KIETTLAKIF (261 aa)). Positions 824-954 (TIYFSDIVGF…DTVNTASRME (131 aa)) constitute a Guanylate cyclase domain.

It belongs to the adenylyl cyclase class-4/guanylyl cyclase family. In terms of assembly, homotrimer. Interacts via its C-terminal region with NHERF4. Interacts with the lectin chaperone VIP36. Glycosylation at Asn-75 and/or Asn-79 is required for interaction with VIP36 while glycosylation at Asn-345 and Asn-402 modulates ligand-mediated GUCY2C activation.

The protein resides in the cell membrane. It localises to the endoplasmic reticulum membrane. The catalysed reaction is GTP = 3',5'-cyclic GMP + diphosphate. In terms of biological role, guanylyl cyclase that catalyzes synthesis of cyclic GMP (cGMP) from GTP. Receptor for the E.coli heat-stable enterotoxin; E.coli enterotoxin markedly stimulates the accumulation of cGMP in mammalian cells expressing GUCY2C. Also activated by the endogenous peptides guanylin and uroguanylin. The chain is Guanylyl cyclase C from Homo sapiens (Human).